The chain runs to 509 residues: Thymus-specific serine protease (509 aa).

An N-terminal signal peptide occupies residues 1-22 (MAVKAPWLGFLLLVSLWGLSTP). N-linked (GlcNAc...) asparagine glycans are attached at residues asparagine 69 and asparagine 171. Serine 184 (charge relay system) is an active-site residue. N-linked (GlcNAc...) asparagine glycosylation is present at asparagine 320. Residues aspartate 446 and histidine 471 each act as charge relay system in the active site.

The protein belongs to the peptidase S28 family. Expressed predominantly in cortical thymic epithelial cells, with highest expression around vessels and the thymic capsule.

It is found in the cytoplasmic vesicle. Functionally, protease that may play a role in T-cell development. This is Thymus-specific serine protease (Prss16) from Mus musculus (Mouse).